Consider the following 118-residue polypeptide: Large ribosomal subunit protein uL18 (118 aa).

The protein belongs to the universal ribosomal protein uL18 family. In terms of assembly, part of the 50S ribosomal subunit; part of the 5S rRNA/L5/L18/L25 subcomplex. Contacts the 5S and 23S rRNAs.

In terms of biological role, this is one of the proteins that bind and probably mediate the attachment of the 5S RNA into the large ribosomal subunit, where it forms part of the central protuberance. The sequence is that of Large ribosomal subunit protein uL18 from Acidobacterium capsulatum (strain ATCC 51196 / DSM 11244 / BCRC 80197 / JCM 7670 / NBRC 15755 / NCIMB 13165 / 161).